The primary structure comprises 420 residues: 3-isopropylmalate dehydratase large subunit (420 aa).

Residues Cys-300, Cys-360, and Cys-363 each contribute to the [4Fe-4S] cluster site.

Belongs to the aconitase/IPM isomerase family. LeuC type 2 subfamily. In terms of assembly, heterodimer of LeuC and LeuD. [4Fe-4S] cluster is required as a cofactor.

It carries out the reaction (2R,3S)-3-isopropylmalate = (2S)-2-isopropylmalate. Its pathway is amino-acid biosynthesis; L-leucine biosynthesis; L-leucine from 3-methyl-2-oxobutanoate: step 2/4. Catalyzes the isomerization between 2-isopropylmalate and 3-isopropylmalate, via the formation of 2-isopropylmaleate. The sequence is that of 3-isopropylmalate dehydratase large subunit from Syntrophus aciditrophicus (strain SB).